We begin with the raw amino-acid sequence, 272 residues long: Small ribosomal subunit protein mS23 (272 aa).

The tract at residues Lys233 to Phe272 is disordered. A compositionally biased stretch (acidic residues) spans Val252–Phe272.

The protein belongs to the mitochondrion-specific ribosomal protein mS23 family. Component of the mitochondrial small ribosomal subunit.

It is found in the mitochondrion. This Candida glabrata (strain ATCC 2001 / BCRC 20586 / JCM 3761 / NBRC 0622 / NRRL Y-65 / CBS 138) (Yeast) protein is Small ribosomal subunit protein mS23 (RSM25).